The sequence spans 921 residues: Isoleucine--tRNA ligase 1 (921 aa).

Positions 57–67 (PYANGDIHMGH) match the 'HIGH' region motif. Residue Glu-552 coordinates L-isoleucyl-5'-AMP. The 'KMSKS' region signature appears at 593–597 (KMSKS). ATP is bound at residue Lys-596. 4 residues coordinate Zn(2+): Cys-888, Cys-891, Cys-908, and Cys-911.

Belongs to the class-I aminoacyl-tRNA synthetase family. IleS type 1 subfamily. In terms of assembly, monomer. It depends on Zn(2+) as a cofactor.

Its subcellular location is the cytoplasm. It catalyses the reaction tRNA(Ile) + L-isoleucine + ATP = L-isoleucyl-tRNA(Ile) + AMP + diphosphate. Catalyzes the attachment of isoleucine to tRNA(Ile). As IleRS can inadvertently accommodate and process structurally similar amino acids such as valine, to avoid such errors it has two additional distinct tRNA(Ile)-dependent editing activities. One activity is designated as 'pretransfer' editing and involves the hydrolysis of activated Val-AMP. The other activity is designated 'posttransfer' editing and involves deacylation of mischarged Val-tRNA(Ile). This chain is Isoleucine--tRNA ligase 1, found in Bacillus cereus (strain ZK / E33L).